Reading from the N-terminus, the 230-residue chain is Ribosomal RNA small subunit methyltransferase Nep1 (230 aa).

S-adenosyl-L-methionine-binding positions include Gly184, Gly189, and Ile205 to Leu210.

It belongs to the class IV-like SAM-binding methyltransferase superfamily. RNA methyltransferase NEP1 family. Homodimer.

The catalysed reaction is a pseudouridine in rRNA + S-adenosyl-L-methionine = an N(1)-methylpseudouridine in rRNA + S-adenosyl-L-homocysteine + H(+). Methyltransferase involved in ribosomal biogenesis. Specifically catalyzes the N1-methylation of the pseudouridine corresponding to position 914 in M.jannaschii 16S rRNA. The polypeptide is Ribosomal RNA small subunit methyltransferase Nep1 (Staphylothermus marinus (strain ATCC 43588 / DSM 3639 / JCM 9404 / F1)).